We begin with the raw amino-acid sequence, 1158 residues long: ATP-dependent helicase/deoxyribonuclease subunit B (1158 aa).

Residues 1 to 275 (MTLHAYLGRA…QYFNQLYRFN (275 aa)) enclose the UvrD-like helicase ATP-binding domain. An ATP-binding site is contributed by 8 to 15 (GRAGTGKS). The 315-residue stretch at 269 to 583 (NQLYRFNNQD…SIGTMDLAKV (315 aa)) folds into the UvrD-like helicase C-terminal domain. The [4Fe-4S] cluster site is built by Cys784, Cys1112, Cys1115, and Cys1121.

This sequence belongs to the helicase family. AddB/RexB type 1 subfamily. In terms of assembly, heterodimer of AddA and AddB. Mg(2+) serves as cofactor. The cofactor is [4Fe-4S] cluster.

In terms of biological role, the heterodimer acts as both an ATP-dependent DNA helicase and an ATP-dependent, dual-direction single-stranded exonuclease. Recognizes the chi site generating a DNA molecule suitable for the initiation of homologous recombination. The AddB subunit has 5' -&gt; 3' nuclease activity but not helicase activity. In Staphylococcus aureus (strain MW2), this protein is ATP-dependent helicase/deoxyribonuclease subunit B.